The following is a 180-amino-acid chain: GTP cyclohydrolase 1 (180 aa).

The Zn(2+) site is built by cysteine 71, histidine 74, and cysteine 142.

The protein belongs to the GTP cyclohydrolase I family. As to quaternary structure, toroid-shaped homodecamer, composed of two pentamers of five dimers.

It catalyses the reaction GTP + H2O = 7,8-dihydroneopterin 3'-triphosphate + formate + H(+). It participates in cofactor biosynthesis; 7,8-dihydroneopterin triphosphate biosynthesis; 7,8-dihydroneopterin triphosphate from GTP: step 1/1. The sequence is that of GTP cyclohydrolase 1 from Helicobacter acinonychis (strain Sheeba).